The following is an 89-amino-acid chain: Ribonuclease P protein component 1 (89 aa).

Belongs to the eukaryotic/archaeal RNase P protein component 1 family. In terms of assembly, consists of a catalytic RNA component and at least 4-5 protein subunits.

Its subcellular location is the cytoplasm. The enzyme catalyses Endonucleolytic cleavage of RNA, removing 5'-extranucleotides from tRNA precursor.. Part of ribonuclease P, a protein complex that generates mature tRNA molecules by cleaving their 5'-ends. The protein is Ribonuclease P protein component 1 of Thermoplasma volcanium (strain ATCC 51530 / DSM 4299 / JCM 9571 / NBRC 15438 / GSS1).